Reading from the N-terminus, the 71-residue chain is ATP synthase subunit c (71 aa).

2 helical membrane-spanning segments follow: residues 4–24 (AVIGAGIAVLTGLGAGIGIGI) and 48–68 (IIGAGLAEATAIYGLIIAFMI).

This sequence belongs to the ATPase C chain family. In terms of assembly, F-type ATPases have 2 components, F(1) - the catalytic core - and F(0) - the membrane proton channel. F(1) has five subunits: alpha(3), beta(3), gamma(1), delta(1), epsilon(1). F(0) has three main subunits: a(1), b(2) and c(10-14). The alpha and beta chains form an alternating ring which encloses part of the gamma chain. F(1) is attached to F(0) by a central stalk formed by the gamma and epsilon chains, while a peripheral stalk is formed by the delta and b chains.

The protein localises to the cell membrane. Its function is as follows. F(1)F(0) ATP synthase produces ATP from ADP in the presence of a proton or sodium gradient. F-type ATPases consist of two structural domains, F(1) containing the extramembraneous catalytic core and F(0) containing the membrane proton channel, linked together by a central stalk and a peripheral stalk. During catalysis, ATP synthesis in the catalytic domain of F(1) is coupled via a rotary mechanism of the central stalk subunits to proton translocation. In terms of biological role, key component of the F(0) channel; it plays a direct role in translocation across the membrane. A homomeric c-ring of between 10-14 subunits forms the central stalk rotor element with the F(1) delta and epsilon subunits. This chain is ATP synthase subunit c, found in Clostridium botulinum (strain Alaska E43 / Type E3).